The chain runs to 199 residues: MGSQSSKAPRGDVTAEEAAGASPAKANGQENGHVKSNGDLTPKGEGESPPVNGADEAAGATGDAIEPAPPSQEAEAKGEVAPKETPKKKKKFSFKKPFKLSGLSFKRNRKEGGGDSSASSPTEEEQEQGEISACSDEGTAQEGKAAATPESQEPQAKGAEASAVSKGGDAEEEAGPQAAEPSTPSGPESGPASASAENE.

The disordered stretch occupies residues 1-199 (MGSQSSKAPR…GPASASAENE (199 aa)). Residue Gly2 is the site of N-myristoyl glycine attachment. Phosphothreonine is present on Thr14. The span at 16 to 26 (EEAAGASPAKA) shows a compositional bias: low complexity. Phosphoserine is present on residues Ser22, Ser36, and Ser48. The span at 53-64 (GADEAAGATGDA) shows a compositional bias: low complexity. Position 71 is a phosphoserine (Ser71). The segment covering 74 to 85 (AEAKGEVAPKET) has biased composition (basic and acidic residues). Phosphothreonine is present on Thr85. Residues 86-98 (PKKKKKFSFKKPF) show a composition bias toward basic residues. Positions 87 to 110 (KKKKKFSFKKPFKLSGLSFKRNRK) are effector domain involved in lipid-binding and calmodulin-binding. Ser93, Ser101, and Ser104 each carry phosphoserine; by PKC. The residue at position 119 (Ser119) is a Phosphoserine. Residue Ser120 is modified to Phosphoserine; by MAPK8. 2 positions are modified to phosphoserine: Ser132 and Ser135. The residue at position 148 (Thr148) is a Phosphothreonine; by MAPK8. Phosphoserine is present on residues Ser151, Ser162, and Ser165. The span at 175-199 (GPQAAEPSTPSGPESGPASASAENE) shows a compositional bias: low complexity. Position 183 is a phosphothreonine; by MAPK8 (Thr183).

Belongs to the MARCKS family. As to quaternary structure, binds to filamentous actin (F-actin), but not to monomeric G-actin, independently of its phosphorylation status. Interacts with calmodulin. Post-translationally, phosphorylated. Phosphorylation at Ser-120 and Thr-183 is non-redundantly catalyzed by MAPK8 in vivo. Phosphorylation at Thr-148 is preferentially catalyzed by MAPK8 in vivo, but this modification can also be catalyzed by other kinases in the absence of MAPK8. May be phosphorylated by protein kinase C, which disrupts the interaction with calmodulin.

The protein resides in the cytoplasm. The protein localises to the cytoskeleton. It localises to the cell membrane. Its function is as follows. Controls cell movement by regulating actin cytoskeleton homeostasis and filopodium and lamellipodium formation. When unphosphorylated, induces cell migration. When phosphorylated by MAPK8, induces actin bundles formation and stabilization, thereby reducing actin plasticity, hence restricting cell movement, including neuronal migration. May be involved in coupling the protein kinase C and calmodulin signal transduction systems. This chain is MARCKS-related protein (Marcksl1), found in Rattus norvegicus (Rat).